The following is a 143-amino-acid chain: Large ribosomal subunit protein uL11 (143 aa).

Belongs to the universal ribosomal protein uL11 family. Part of the ribosomal stalk of the 50S ribosomal subunit. Interacts with L10 and the large rRNA to form the base of the stalk. L10 forms an elongated spine to which L12 dimers bind in a sequential fashion forming a multimeric L10(L12)X complex. Post-translationally, one or more lysine residues are methylated.

In terms of biological role, forms part of the ribosomal stalk which helps the ribosome interact with GTP-bound translation factors. This Pseudomonas savastanoi pv. phaseolicola (strain 1448A / Race 6) (Pseudomonas syringae pv. phaseolicola (strain 1448A / Race 6)) protein is Large ribosomal subunit protein uL11.